Here is a 487-residue protein sequence, read N- to C-terminus: MKDILKLSIAEMHENLIKKEFSAVELTQTHIDAINNEQLNAFITKTPEVALDAARKADHILIHEQDKITPLTGIPVGIKDLFCTKNIKTTACSNILRNFTPQYDSTVVKRLIDDGAVMLGKLNMDEFAMGSSNSNSCFGPVENPWTRADGVKVVPGGSSGGSSAAVAGFLCAGALGSDTGGSVRQPAAFCGIVGLKPTYGRCSRLGMIAFASSLDQAGVLTRTVKDAALMLQPICGYDTQDSTSANITTPRFLDSITNIIKGKRIGIPKEYELSDKYKEYEEVSEMWLKGIKYLENEGAEIVNISLPHTSYALPVYYIICSAEASSNLARYDGIKYGTRVNSDNINEMYELTRGNNLGTEVKRRILIGAYALSSGYYDAYYNKAQCIRRLVTNDFVESFKSVDYILTPTAPKEAFAMDEQLDTLTMYLNDVFTVPASLAGLPAISIPIGLSKNKLPLSLQIIGNYYDEGGILNIASVIEKHTGNILK.

Catalysis depends on charge relay system residues lysine 79 and serine 158. The Acyl-ester intermediate role is filled by serine 182.

Belongs to the amidase family. GatA subfamily. In terms of assembly, heterotrimer of A, B and C subunits.

The enzyme catalyses L-glutamyl-tRNA(Gln) + L-glutamine + ATP + H2O = L-glutaminyl-tRNA(Gln) + L-glutamate + ADP + phosphate + H(+). Allows the formation of correctly charged Gln-tRNA(Gln) through the transamidation of misacylated Glu-tRNA(Gln) in organisms which lack glutaminyl-tRNA synthetase. The reaction takes place in the presence of glutamine and ATP through an activated gamma-phospho-Glu-tRNA(Gln). This chain is Glutamyl-tRNA(Gln) amidotransferase subunit A, found in Ehrlichia ruminantium (strain Welgevonden).